The primary structure comprises 257 residues: Small ribosomal subunit protein uS15m (257 aa).

A mitochondrion-targeting transit peptide spans 1-57; it reads MLRAAWRALSSVRVQAVTQAPVPALRARSSASLPSARCGLQTPSLLNAARAYAVQKP. Positions 228–257 are disordered; the sequence is KAAAAAAKKEKRERVPENPSNALPEKTKEN. Residues 234-243 show a composition bias toward basic and acidic residues; sequence AKKEKRERVP.

It belongs to the universal ribosomal protein uS15 family. In terms of assembly, component of the mitochondrial ribosome small subunit (28S) which comprises a 12S rRNA and about 30 distinct proteins. Interacts with METTL17.

The protein localises to the mitochondrion matrix. The sequence is that of Small ribosomal subunit protein uS15m (Mrps15) from Rattus norvegicus (Rat).